Here is a 509-residue protein sequence, read N- to C-terminus: Heat shock 70 kDa protein 14 (509 aa).

It belongs to the heat shock protein 70 family. In terms of assembly, component of ribosome-associated complex (RAC), a heterodimer composed of Hsp70/DnaK-type chaperone HSPA14 and Hsp40/DnaJ-type chaperone DNAJC2.

The protein localises to the cytoplasm. It localises to the cytosol. In terms of biological role, component of the ribosome-associated complex (RAC), a complex involved in folding or maintaining nascent polypeptides in a folding-competent state. In the RAC complex, binds to the nascent polypeptide chain, while DNAJC2 stimulates its ATPase activity. In Rattus norvegicus (Rat), this protein is Heat shock 70 kDa protein 14 (Hspa14).